A 256-amino-acid chain; its full sequence is Protein YIPF7 (256 aa).

Over 1–125 (MSNLAQFDSD…VDGSIMNETD (125 aa)) the chain is Cytoplasmic. Composition is skewed to polar residues over residues 18–31 (IDNQ…SNAY) and 38–48 (RKQQAGEQPQP). The tract at residues 18–48 (IDNQEQSGNDSNAYGNLYGSRKQQAGEQPQP) is disordered. A helical membrane pass occupies residues 126–146 (LTGPILFCVALGATLLLAGKV). A topological domain (extracellular) is located at residue glutamine 147. A helical membrane pass occupies residues 148–168 (FGYVYGMSAIGCLVIHALLNL). Residues 169–172 (MSSS) lie on the Cytoplasmic side of the membrane. The helical transmembrane segment at 173 to 193 (GVSYGCVASVLGYCLLPMVIL) threads the bilayer. At 194–196 (SGC) the chain is on the extracellular side. Residues 197–217 (AMFFSLQGIFGIMSSLVIIGW) form a helical membrane-spanning segment. Residues 218-235 (CSLSASKIFIAALHMEGQ) lie on the Cytoplasmic side of the membrane. Residues 236–256 (QLLVAYPCAILYGLFALLTIF) traverse the membrane as a helical segment.

This sequence belongs to the YIP1 family.

The protein resides in the endoplasmic reticulum membrane. It localises to the golgi apparatus. It is found in the cis-Golgi network membrane. The protein localises to the trans-Golgi network membrane. The chain is Protein YIPF7 (YIPF7) from Homo sapiens (Human).